The following is a 474-amino-acid chain: tRNA-2-methylthio-N(6)-dimethylallyladenosine synthase (474 aa).

Residues 3 to 120 (KKLLIKTWGC…LPEMIKQSQS (118 aa)) enclose the MTTase N-terminal domain. Residues Cys-12, Cys-49, Cys-83, Cys-157, Cys-161, and Cys-164 each contribute to the [4Fe-4S] cluster site. The region spanning 143–375 (RAEGATAFVS…QQTVNTQAMR (233 aa)) is the Radical SAM core domain. A TRAM domain is found at 378–441 (RQMLDTEQRV…ANSLRGELVR (64 aa)).

This sequence belongs to the methylthiotransferase family. MiaB subfamily. As to quaternary structure, monomer. The cofactor is [4Fe-4S] cluster.

It is found in the cytoplasm. The enzyme catalyses N(6)-dimethylallyladenosine(37) in tRNA + (sulfur carrier)-SH + AH2 + 2 S-adenosyl-L-methionine = 2-methylsulfanyl-N(6)-dimethylallyladenosine(37) in tRNA + (sulfur carrier)-H + 5'-deoxyadenosine + L-methionine + A + S-adenosyl-L-homocysteine + 2 H(+). Catalyzes the methylthiolation of N6-(dimethylallyl)adenosine (i(6)A), leading to the formation of 2-methylthio-N6-(dimethylallyl)adenosine (ms(2)i(6)A) at position 37 in tRNAs that read codons beginning with uridine. This chain is tRNA-2-methylthio-N(6)-dimethylallyladenosine synthase, found in Vibrio campbellii (strain ATCC BAA-1116).